The primary structure comprises 96 residues: Exodeoxyribonuclease 7 small subunit (96 aa).

A compositionally biased stretch (basic and acidic residues) spans 61-79; it reads ALTKDESQKTNKTGFRTES. A disordered region spans residues 61–96; sequence ALTKDESQKTNKTGFRTESKSTSQTSSDSVLEEDLF. Positions 80-89 are enriched in low complexity; the sequence is KSTSQTSSDS.

The protein belongs to the XseB family. As to quaternary structure, heterooligomer composed of large and small subunits.

It localises to the cytoplasm. The enzyme catalyses Exonucleolytic cleavage in either 5'- to 3'- or 3'- to 5'-direction to yield nucleoside 5'-phosphates.. In terms of biological role, bidirectionally degrades single-stranded DNA into large acid-insoluble oligonucleotides, which are then degraded further into small acid-soluble oligonucleotides. The polypeptide is Exodeoxyribonuclease 7 small subunit (Leptospira borgpetersenii serovar Hardjo-bovis (strain JB197)).